The sequence spans 129 residues: Small ribosomal subunit protein uS11 (129 aa).

This sequence belongs to the universal ribosomal protein uS11 family. As to quaternary structure, part of the 30S ribosomal subunit. Interacts with proteins S7 and S18. Binds to IF-3.

Located on the platform of the 30S subunit, it bridges several disparate RNA helices of the 16S rRNA. Forms part of the Shine-Dalgarno cleft in the 70S ribosome. The polypeptide is Small ribosomal subunit protein uS11 (Bradyrhizobium sp. (strain ORS 278)).